Reading from the N-terminus, the 221-residue chain is Iron-sulfur cluster repair protein YtfE (221 aa).

Belongs to the RIC family. YtfE subfamily. In terms of assembly, homodimer.

The protein resides in the cytoplasm. Its function is as follows. Di-iron-containing protein involved in the repair of iron-sulfur clusters damaged by oxidative and nitrosative stress conditions. This is Iron-sulfur cluster repair protein YtfE from Cronobacter sakazakii (strain ATCC BAA-894) (Enterobacter sakazakii).